Reading from the N-terminus, the 55-residue chain is Spermatid nuclear transition protein 1 (55 aa).

The segment covering 1–42 (MSTSRKLKSHGMRRSKSRSPHKGVKRGGSKRKYRKGNLKSRK) has biased composition (basic residues). Residues 1–55 (MSTSRKLKSHGMRRSKSRSPHKGVKRGGSKRKYRKGNLKSRKRGDDANRNYRSHL) are disordered. Phosphoserine is present on residues Ser9 and Ser40.

Belongs to the nuclear transition protein 1 family. As to expression, expressed by spermatids (at protein level).

Its subcellular location is the nucleus. The protein resides in the chromosome. Functionally, plays a key role in the replacement of histones to protamine in the elongating spermatids of mammals. In condensing spermatids, loaded onto the nucleosomes, where it promotes the recruitment and processing of protamines, which are responsible for histone eviction. The chain is Spermatid nuclear transition protein 1 (TNP1) from Homo sapiens (Human).